Consider the following 572-residue polypeptide: Phosphoenolpyruvate-protein phosphotransferase (572 aa).

H191 serves as the catalytic Tele-phosphohistidine intermediate. Residues R298 and R334 each contribute to the phosphoenolpyruvate site. Mg(2+)-binding residues include E433 and D457. Phosphoenolpyruvate contacts are provided by residues N456 to D457 and R467. The active-site Proton donor is C504.

Belongs to the PEP-utilizing enzyme family. In terms of assembly, homodimer. Mg(2+) serves as cofactor.

It is found in the cytoplasm. It carries out the reaction L-histidyl-[protein] + phosphoenolpyruvate = N(pros)-phospho-L-histidyl-[protein] + pyruvate. In terms of biological role, general (non sugar-specific) component of the phosphoenolpyruvate-dependent sugar phosphotransferase system (sugar PTS). This major carbohydrate active-transport system catalyzes the phosphorylation of incoming sugar substrates concomitantly with their translocation across the cell membrane. Enzyme I transfers the phosphoryl group from phosphoenolpyruvate (PEP) to the phosphoryl carrier protein (HPr). The protein is Phosphoenolpyruvate-protein phosphotransferase (ptsI) of Staphylococcus aureus (strain Mu50 / ATCC 700699).